Here is a 414-residue protein sequence, read N- to C-terminus: 2,3-diketo-5-methylthiopentyl-1-phosphate enolase (414 aa).

Lys-99 functions as the Proton acceptor in the catalytic mechanism. Residues Lys-148, 174–177, His-265, Gly-338, and 360–361 contribute to the substrate site; these read KDDE and GG. Residues Lys-174, Asp-176, and Glu-177 each contribute to the Mg(2+) site. Lys-174 is modified (N6-carboxylysine).

The protein belongs to the RuBisCO large chain family. Type IV subfamily. In terms of assembly, homodimer. It depends on Mg(2+) as a cofactor.

The catalysed reaction is 5-methylsulfanyl-2,3-dioxopentyl phosphate = 2-hydroxy-5-methylsulfanyl-3-oxopent-1-enyl phosphate. It functions in the pathway amino-acid biosynthesis; L-methionine biosynthesis via salvage pathway; L-methionine from S-methyl-5-thio-alpha-D-ribose 1-phosphate: step 3/6. Its function is as follows. Catalyzes the enolization of 2,3-diketo-5-methylthiopentyl-1-phosphate (DK-MTP-1-P) into 2-hydroxy-3-keto-5-methylthiopentenyl-1-phosphate (HK-MTPenyl-1-P). In Bacillus anthracis (strain CDC 684 / NRRL 3495), this protein is 2,3-diketo-5-methylthiopentyl-1-phosphate enolase.